The primary structure comprises 57 residues: Large ribosomal subunit protein bL32 (57 aa).

Residues 1-25 (MATPSNKNSKSHKRNRRGHIGLNVP) form a disordered region. The segment covering 9-19 (SKSHKRNRRGH) has biased composition (basic residues).

Belongs to the bacterial ribosomal protein bL32 family.

This chain is Large ribosomal subunit protein bL32, found in Leuconostoc mesenteroides subsp. mesenteroides (strain ATCC 8293 / DSM 20343 / BCRC 11652 / CCM 1803 / JCM 6124 / NCDO 523 / NBRC 100496 / NCIMB 8023 / NCTC 12954 / NRRL B-1118 / 37Y).